The sequence spans 529 residues: Calcium-dependent protein kinase 3 (529 aa).

The tract at residues 1 to 73 (MGHRHSKSKS…GRILGRPMEE (73 aa)) is disordered. Gly2 carries the N-myristoyl glycine lipid modification. A compositionally biased stretch (gly residues) spans 39 to 53 (SGSGTVGSSGSGTGG). Residues 78-336 (YEFGRELGRG…AAEVLNHPWI (259 aa)) form the Protein kinase domain. ATP-binding positions include 84–92 (LGRGQFGVT) and Lys107. The Proton acceptor role is filled by Asp202. Ser242 carries the phosphoserine modification. The segment at 342 to 372 (ASDKPLDNAVLSRMKQFRAMNKLKKMALKVI) is autoinhibitory domain. 4 EF-hand domains span residues 379-414 (EEIIGLKEMFKSLDTDNNGIVTLEELRTGLPKLGSK), 415-450 (ISEAEIRQLMEAADMDGDGSIDYLEFISATMHMNRI), 451-485 (EREDHLYTAFQFFDNDNSGYITMEELELAMKKYNM), and 486-521 (GDDKSIKEIIAEVDTDRDGKINYEEFVAMMKKGNPE). Residues Asp392, Asp394, Asn396, Glu403, Asp428, Asp430, Asp432, Ser434, Glu439, Asp464, Asp466, Ser468, Tyr470, Glu475, Asp499, Asp501, Asp503, Lys505, and Glu510 each coordinate Ca(2+).

Belongs to the protein kinase superfamily. Ser/Thr protein kinase family. CDPK subfamily. In terms of assembly, interacts with GHR1. Expressed in both guard cells and mesophyll cells.

It localises to the cytoplasm. The protein resides in the nucleus. The enzyme catalyses L-seryl-[protein] + ATP = O-phospho-L-seryl-[protein] + ADP + H(+). It catalyses the reaction L-threonyl-[protein] + ATP = O-phospho-L-threonyl-[protein] + ADP + H(+). Its activity is regulated as follows. Activated by calcium. Autophosphorylation may play an important role in the regulation of the kinase activity. In terms of biological role, may play a role in signal transduction pathways that involve calcium as a second messenger. Functions in abscisic acid (ABA) regulation of guard cell S-type anion- and Ca(2+)-permeable channels and stomatal closure. The polypeptide is Calcium-dependent protein kinase 3 (Arabidopsis thaliana (Mouse-ear cress)).